A 198-amino-acid chain; its full sequence is TM2 domain-containing protein 2 (198 aa).

Positions 1 to 27 (MRWPVPPVGYLLLGGQGLLLTFSLISS) are cleaved as a signal peptide. The Extracellular segment spans residues 28-128 (QNQTSPVTYP…FLRGNKPCIK (101 aa)). Asparagine 29, asparagine 40, and asparagine 76 each carry an N-linked (GlcNAc...) asparagine glycan. Residues 129-149 (YTGHYFITTLLYSFFLGCFGV) traverse the membrane as a helical segment. One can recognise a TM2 domain in the interval 131-179 (GHYFITTLLYSFFLGCFGVDRFCLGHTGTAVGKLLTLGGLGIWWFVDLI). The Cytoplasmic segment spans residues 150–166 (DRFCLGHTGTAVGKLLT). Residues 167 to 187 (LGGLGIWWFVDLILLITGGLM) form a helical membrane-spanning segment. Over 188–198 (PSDNSNWCTIY) the chain is Extracellular.

The protein belongs to the TM2 family.

Its subcellular location is the membrane. The sequence is that of TM2 domain-containing protein 2 (tm2d2) from Xenopus tropicalis (Western clawed frog).